A 492-amino-acid polypeptide reads, in one-letter code: uncharacterized protein (492 aa).

12 helical membrane-spanning segments follow: residues 16–36, 39–59, 107–127, 133–153, 162–182, 210–230, 243–263, 291–311, 350–370, 394–414, 429–449, and 454–474; these read FIAFVFNYIAGFGFISVVMTM, VGPFSYLVLGLTSFAILGVVL, SFNGVVIPAVLIFSFADIPVV, IIIGLLVGGFLLFGLLTFISL, AIFYFAVIKWIVVIGGFILGI, IIFISLALTIAFAGTEDLASI, FLIAFGCVVLLYLVGFVIISG, LVGGVPLLVIYGLGLLVNSLA, VLISNLMTLLVMLIMVIIPFL, MAAAISLIQYFITFIFFFMIF, VSYVISFALVSVLLFVPLFPF, and VFNTFKIVVLICFYLLGVGFF.

To M.genitalium MG225.

It is found in the cell membrane. This is an uncharacterized protein from Mycoplasma genitalium (strain ATCC 33530 / DSM 19775 / NCTC 10195 / G37) (Mycoplasmoides genitalium).